A 311-amino-acid chain; its full sequence is MSTDLLDRTVAEIAEEMAQRTDRGEVANYIPELARVDPQGFGLVVIDADGHVAAGGDADLPFSIQSISKVFTLTLALGKAGDRVWRRVGREPSGTAFNSIVQLERERGIPRNPFINAGAIAVTDLILSGHQPREALGEILRFMQFLAADSAITIDEAVAASEQRTGFRNAALANYMKSFGVLDNPVDYTLGVYFHHCAIAMSCRQLAMAGRFLAHNGRNPSTGHNVVSAQRARRINALMLTCGHYDGSGEFAYRVGLPGKSGVGGGVLAVAPGKASIAVWSPGLDASGNSHLGRIALEALTKRLGWSIFGV.

Substrate contacts are provided by serine 66, asparagine 116, glutamate 162, asparagine 169, tyrosine 193, tyrosine 245, and valine 263.

Belongs to the glutaminase family. As to quaternary structure, homotetramer.

The catalysed reaction is L-glutamine + H2O = L-glutamate + NH4(+). In Rhodopseudomonas palustris (strain BisB5), this protein is Glutaminase.